A 933-amino-acid chain; its full sequence is Progesterone receptor (933 aa).

The AF3; mediates transcriptional activation stretch occupies residues 1–164; it reads MTELKAKGPR…PATQGVLSPL (164 aa). A disordered region spans residues 1 to 256; it reads MTELKAKGPR…AAAGGGAAAV (256 aa). Residues 1 to 566 are modulating, Pro-Rich; the sequence is MTELKAKGPR…YSFESLPQKI (566 aa). Ser20 carries the phosphoserine modification. An LXXL motif 1 motif is present at residues 55 to 59; it reads LDGLL. Phosphoserine is present on Ser81. The short motif at 115–119 is the LXXL motif 2 element; sequence LDTLL. Phosphoserine occurs at positions 130 and 162. The tract at residues 165 to 305 is mediates transcriptional transrepression; sequence MSRSGCKAGD…LATTMMDFIH (141 aa). The Nuclear localization signal signature appears at 183 to 187; that stretch reads KVLPR. A phosphoserine mark is found at Ser190 and Ser213. Acidic residues predominate over residues 220–231; the sequence is EVEEEDGSESEE. Residues 232–246 show a composition bias toward low complexity; the sequence is SAGPLLKGKPRALGG. A Phosphoserine; by MAPK1 modification is found at Ser294. A disordered region spans residues 331–378; that stretch reads GGAGAASAFAPPRSSPSASSTPVAVGDFPDCAYPPDAEPKDDAYPLYS. Low complexity predominate over residues 335–350; it reads AASAFAPPRSSPSASS. Residue Ser345 is modified to Phosphoserine; by MAPK. A Glycyl lysine isopeptide (Lys-Gly) (interchain with G-Cter in SUMO); alternate cross-link involves residue Lys388. Lys388 is covalently cross-linked (Glycyl lysine isopeptide (Lys-Gly) (interchain with G-Cter in ubiquitin); alternate). Ser400 carries the phosphoserine; by CDK2 modification. A disordered region spans residues 415–452; sequence PDFPLGPPPPLPPRAPPSRPGEAAVTAAPASASVSSAS. Positions 418–433 are enriched in pro residues; it reads PLGPPPPLPPRAPPSR. Over residues 434 to 452 the composition is skewed to low complexity; it reads PGEAAVTAAPASASVSSAS. Residues 456–546 are AF1; mediates transcriptional activation; sequence STLECILYKA…VYPPYLNYLR (91 aa). Lys531 participates in a covalent cross-link: Glycyl lysine isopeptide (Lys-Gly) (interchain with G-Cter in SUMO). 2 consecutive NR C4-type zinc fingers follow at residues 567 to 587 and 603 to 627; these read CLIC…CGSC and CAGR…LRKC. Residues 567-639 constitute a DNA-binding region (nuclear receptor); that stretch reads CLICGDEASG…AGMVLGGRKF (73 aa). Phosphoserine is present on Ser676. The 235-residue stretch at 679-913 folds into the NR LBD domain; the sequence is QDIQLIPPLI…EFPEMMSEVI (235 aa). Residues 687 to 933 are AF2; mediates transcriptional activation; the sequence is LINLLMSIEP…MVKPLLFHKK (247 aa). Arg766 provides a ligand contact to progesterone.

It belongs to the nuclear hormone receptor family. As to quaternary structure, interacts with SMARD1 and UNC45A. Interacts with CUEDC2; the interaction promotes ubiquitination, decreases sumoylation, and represses transcriptional activity. Interacts with PIAS3; the interaction promotes sumoylation of PR in a hormone-dependent manner, inhibits DNA-binding, and alters nuclear export. Interacts with SP1; the interaction requires ligand-induced phosphorylation on Ser-345 by ERK1/2-MAPK. Interacts with PRMT2. Interacts with NCOA2 and NCOA1. Interacts with KLF9. Interacts with GTF2B. Phosphorylated on multiple serine sites. Several of these sites are hormone-dependent. Phosphorylation on Ser-294 is highly hormone-dependent and modulates ubiquitination and sumoylation on Lys-388. Phosphorylation on Ser-102 and Ser-345 also requires induction by hormone. Basal phosphorylation on Ser-81, Ser-162, Ser-190 and Ser-400 is increased in response to progesterone and can be phosphorylated in vitro by the CDK2-A1 complex. Increased levels of phosphorylation on Ser-400 also in the presence of EGF, heregulin, IGF, PMA and FBS. Phosphorylation at this site by CDK2 is ligand-independent, and increases nuclear translocation and transcriptional activity. Phosphorylation at Ser-162 and Ser-294, but not at Ser-190, is impaired during the G(2)/M phase of the cell cycle. Phosphorylation on Ser-345 by ERK1/2 MAPK is required for interaction with SP1. In terms of processing, sumoylation is hormone-dependent and represses transcriptional activity. Sumoylation on all three sites is enhanced by PIAS3. Desumoylated by SENP1. Sumoylation on Lys-388, the main site of sumoylation, is repressed by ubiquitination on the same site, and modulated by phosphorylation at Ser-294. Post-translationally, ubiquitination is hormone-dependent and represses sumoylation on the same site. Promoted by MAPK-mediated phosphorylation on Ser-294. Ubiquitinated by UBR5, leading to its degradation: UBR5 specifically recognizes and binds ligand-bound PGR when it is not associated with coactivators (NCOAs). In presence of NCOAs, the UBR5-degron is not accessible, preventing its ubiquitination and degradation. Palmitoylated by ZDHHC7 and ZDHHC21. Palmitoylation is required for plasma membrane targeting and for rapid intracellular signaling via ERK and AKT kinases and cAMP generation.

Its subcellular location is the nucleus. It is found in the cytoplasm. Functionally, the steroid hormones and their receptors are involved in the regulation of eukaryotic gene expression and affect cellular proliferation and differentiation in target tissues. Transcriptional activator of several progesteron-dependent promoters in a variety of cell types. Involved in activation of SRC-dependent MAPK signaling on hormone stimulation. In Pan paniscus (Pygmy chimpanzee), this protein is Progesterone receptor (PGR).